Here is a 421-residue protein sequence, read N- to C-terminus: Zinc metalloproteinase-disintegrin-like lachestatin-2 (421 aa).

Residues 10-206 (KYVKLVLVAD…DMPQCILEKP (197 aa)) form the Peptidase M12B domain. 3 cysteine pairs are disulfide-bonded: C121/C201, C161/C185, and C163/C168. H146 serves as a coordination point for Zn(2+). E147 is a catalytic residue. Residues H150 and H156 each coordinate Zn(2+). The region spanning 214 to 299 (PPVCGNYFVE…AECTDRFQRN (86 aa)) is the Disintegrin domain. Residues V216, N219, F221, E223, E226, and D229 each contribute to the Ca(2+) site. 14 cysteine pairs are disulfide-bonded: C217–C246, C228–C241, C230–C236, C240–C263, C254–C260, C259–C285, C272–C292, C279–C310, C303–C315, C322–C372, C337–C383, C350–C360, C367–C409, and C403–C414. A D/ECD-tripeptide motif is present at residues 278 to 280 (ECD). Positions 280, 281, 283, 294, and 295 each coordinate Ca(2+). A glycan (N-linked (GlcNAc...) asparagine) is linked at N312.

It belongs to the venom metalloproteinase (M12B) family. P-III subfamily. P-IIIc sub-subfamily. In terms of assembly, homodimer; disulfide-linked. Zn(2+) is required as a cofactor. In terms of tissue distribution, expressed by the venom gland.

The protein resides in the secreted. Its function is as follows. Snake venom zinc metalloprotease that induces apoptosis in vascular endothelial cells (VEC), without degrading the extracellular matrix (it cannot cleave collagen) or inhibiting adhesion of VEC. Has also fibrinogenolytic and hemorrhagic activities. In Lachesis muta rhombeata (Bushmaster), this protein is Zinc metalloproteinase-disintegrin-like lachestatin-2.